The sequence spans 1643 residues: Lysine-specific demethylase 6B (1643 aa).

Disordered regions lie at residues 52 to 88, 190 to 680, 704 to 807, and 822 to 1096; these read GQPP…PLHG, AKRG…PLED, ESIR…LKSL, and GAAV…RSLS. Low complexity-rich tracts occupy residues 63–74 and 212–223; these read SHGSSSGHPSKP and AALSGPSGEEGL. Phosphoserine is present on S224. Residues 242–266 are compositionally biased toward pro residues; sequence PGLPLPPPPLPPPPPPPPPPPPPLP. Positions 291–307 are enriched in basic and acidic residues; the sequence is GPERKGSAPPERQEQRH. A compositionally biased stretch (pro residues) spans 332-342; it reads AAPPGPGPRPP. A compositionally biased stretch (basic and acidic residues) spans 359 to 370; it reads DLRESRVQRSRM. The span at 394–412 shows a compositional bias: low complexity; sequence PGTTTSSSSSSSSNTGLRG. Over residues 460 to 484 the composition is skewed to pro residues; the sequence is SLPPGPSSPPPPPCPRLLRPPPPPA. The segment covering 550 to 569 has biased composition (low complexity); that stretch reads TTSSSNSNSGSHSSSPAGPV. Composition is skewed to pro residues over residues 584–600 and 641–658; these read LPRP…PPLV and GPGP…PVPP. Over residues 704 to 714 the composition is skewed to basic and acidic residues; sequence ESIRKEEEQQQ. Residues 740–764 are compositionally biased toward low complexity; it reads TAPTTTAPAVAVTTTTTTTTTTTAT. A compositionally biased stretch (pro residues) spans 772–800; the sequence is PPALPPPPPLAKFPPPSQPQPPPPPPPSP. Residues 843–877 are compositionally biased toward low complexity; the sequence is SGATALPPTSAAPSAQGSPQPSASSSSQFSTSGGP. A compositionally biased stretch (pro residues) spans 889–904; it reads VPGPMTPTQPPPPLSL. Positions 916 to 929 are enriched in basic and acidic residues; sequence EISRACETLVERVG. Basic residues predominate over residues 972 to 989; it reads CKRRQKEHQKEHRRHRRA. A compositionally biased stretch (basic and acidic residues) spans 990–1003; that stretch reads CKDSVGRRPREGRA. Residues 1004–1016 are compositionally biased toward basic residues; that stretch reads KAKAKVPKEKSRR. The segment covering 1047–1067 has biased composition (pro residues); sequence PTAPAPPSAPAPSAQPTPPSA. Residue K1109 forms a Glycyl lysine isopeptide (Lys-Gly) (interchain with G-Cter in SUMO2) linkage. The segment at 1288–1325 is disordered; sequence FQESLQEEKESEDEESEEPDSTTGTPPSSAPDPKNHHI. Acidic residues predominate over residues 1296 to 1307; sequence KESEDEESEEPD. In terms of domain architecture, JmjC spans 1339 to 1502; sequence RWKPQLQELL…YQLALERYEW (164 aa). H1390, E1392, and H1470 together coordinate Fe cation. C1575, C1578, C1602, and C1605 together coordinate Zn(2+).

This sequence belongs to the UTX family. Interacts with TLE1. Component of the MLL4 complex, at least composed of KMT2B/MLL4, ASH2L, RBBP5, WDR5, and KDM6B. Interacts with TBX21, SMARCA4, SMARCC1 and SMARCC2. The cofactor is L-ascorbate. Requires Fe(2+) as cofactor.

Its subcellular location is the nucleus. It carries out the reaction N(6),N(6),N(6)-trimethyl-L-lysyl(27)-[histone H3] + 2 2-oxoglutarate + 2 O2 = N(6)-methyl-L-lysyl(27)-[histone H3] + 2 formaldehyde + 2 succinate + 2 CO2. In terms of biological role, histone demethylase that specifically demethylates 'Lys-27' of histone H3, thereby playing a central role in histone code. Demethylates trimethylated and dimethylated H3 'Lys-27'. Plays a central role in regulation of posterior development, by regulating HOX gene expression. Involved in inflammatory response by participating in macrophage differentiation in case of inflammation by regulating gene expression and macrophage differentiation. Plays a demethylase-independent role in chromatin remodeling to regulate T-box family member-dependent gene expression by acting as a link between T-box factors and the SMARCA4-containing SWI/SNF remodeling complex. This chain is Lysine-specific demethylase 6B (KDM6B), found in Homo sapiens (Human).